The chain runs to 148 residues: UPF0756 membrane protein YeaL (148 aa).

Helical transmembrane passes span A14 to V34, L51 to L71, L86 to M106, and V121 to V141.

The protein belongs to the UPF0756 family.

The protein resides in the cell membrane. The chain is UPF0756 membrane protein YeaL from Escherichia coli O127:H6 (strain E2348/69 / EPEC).